A 228-amino-acid polypeptide reads, in one-letter code: MSYTEKPDEITKDEWMEKLNNLHVQRADMNRLIMNYLVTEGFKEAAEKFRMESGIEPSVDLETLDERIKIREMILKGQIQEAIALINSLHPELLDTNRYLYFHLQQQHLIELIRQRETEAALEFAQTQLAEQGEESRECLTEMERTLALLAFDNPEDSPFGDLLNMMQRQKVWSEVNQAVLDYENRESTPKLAKLLKLLLWAQNELDQKKVKYPKMTDLSKGVIEEPK.

The region spanning 25 to 57 (QRADMNRLIMNYLVTEGFKEAAEKFRMESGIEP) is the LisH domain. A CTLH domain is found at 63–120 (TLDERIKIREMILKGQIQEAIALINSLHPELLDTNRYLYFHLQQQHLIELIRQRETEA). Residues 116–212 (RETEAALEFA…QNELDQKKVK (97 aa)) are interaction with CTNNB1.

This sequence belongs to the GID8 family. As to quaternary structure, homodimer; may also form higher oligomers. Identified in the CTLH complex that contains GID4, RANBP9 and/or RANBP10, MKLN1, MAEA, RMND5A (or alternatively its paralog RMND5B), GID8, ARMC8, WDR26 and YPEL5. Within this complex, MAEA, RMND5A (or alternatively its paralog RMND5B), GID8, WDR26, and RANBP9 and/or RANBP10 form the catalytic core, while GID4, MKLN1, ARMC8 and YPEL5 have ancillary roles. Interacts with RANBP9. Part of a complex consisting of RANBP9, MKLN1 and GID8. Interacts with CTNNB1, AXIN1 and GSK3B. In terms of processing, polyubiquitinated through 'Lys-48'-polyubiquitin chains, leading to proteasomal degradation in the absence of Wnt stimulation.

It localises to the cytoplasm. The protein localises to the nucleus. Core component of the CTLH E3 ubiquitin-protein ligase complex that selectively accepts ubiquitin from UBE2H and mediates ubiquitination and subsequent proteasomal degradation of the transcription factor HBP1. Acts as a positive regulator of Wnt signaling pathway by promoting beta-catenin (CTNNB1) nuclear accumulation. The sequence is that of Glucose-induced degradation protein 8 homolog (GID8) from Bos taurus (Bovine).